The chain runs to 193 residues: Putative F-box protein At1g31072 (193 aa).

Residues 4-53 (EKTLDSIPIDVFLDIFSRLPAKSVGRSCCVSNRWASILGSQDFKELFLTM) form the F-box domain.

In Arabidopsis thaliana (Mouse-ear cress), this protein is Putative F-box protein At1g31072.